The primary structure comprises 209 residues: Small ribosomal subunit protein uS4 (209 aa).

The disordered stretch occupies residues R22 to S45. Positions C93 to E154 constitute an S4 RNA-binding domain.

Belongs to the universal ribosomal protein uS4 family. In terms of assembly, part of the 30S ribosomal subunit. Contacts protein S5. The interaction surface between S4 and S5 is involved in control of translational fidelity.

Functionally, one of the primary rRNA binding proteins, it binds directly to 16S rRNA where it nucleates assembly of the body of the 30S subunit. With S5 and S12 plays an important role in translational accuracy. The sequence is that of Small ribosomal subunit protein uS4 from Chlamydia trachomatis serovar A (strain ATCC VR-571B / DSM 19440 / HAR-13).